Here is a 224-residue protein sequence, read N- to C-terminus: 7-cyano-7-deazaguanine synthase (224 aa).

7-17 contacts ATP; that stretch reads LSGGLDSSTIL. Residues cysteine 191, cysteine 199, cysteine 202, and cysteine 205 each coordinate Zn(2+).

The protein belongs to the QueC family. Zn(2+) serves as cofactor.

It catalyses the reaction 7-carboxy-7-deazaguanine + NH4(+) + ATP = 7-cyano-7-deazaguanine + ADP + phosphate + H2O + H(+). The protein operates within purine metabolism; 7-cyano-7-deazaguanine biosynthesis. Its function is as follows. Catalyzes the ATP-dependent conversion of 7-carboxy-7-deazaguanine (CDG) to 7-cyano-7-deazaguanine (preQ(0)). The chain is 7-cyano-7-deazaguanine synthase from Nostoc punctiforme (strain ATCC 29133 / PCC 73102).